A 234-amino-acid chain; its full sequence is DNA repair protein RecO (234 aa).

It belongs to the RecO family.

Involved in DNA repair and RecF pathway recombination. This is DNA repair protein RecO from Alteromonas mediterranea (strain DSM 17117 / CIP 110805 / LMG 28347 / Deep ecotype).